The chain runs to 568 residues: PCNA-interacting partner (568 aa).

The disordered stretch occupies residues 442–555 (QIPTCVHPAP…RNNKAVSKKL (114 aa)). Residues 488-500 (NAWNQTGGKSTQP) show a composition bias toward polar residues. Basic and acidic residues predominate over residues 515–527 (ANRECTEQGREEN).

This sequence belongs to the PARI family.

It is found in the cytoplasm. The protein resides in the nucleus. Required to suppress inappropriate homologous recombination, thereby playing a central role DNA repair and in the maintenance of genomic stability. The protein is PCNA-interacting partner (parpbp) of Danio rerio (Zebrafish).